Reading from the N-terminus, the 874-residue chain is Mannuronan C5-epimerase AlgE6 (874 aa).

PbH1 repeat units follow at residues 133–155, 157–179, 180–202, 204–226, 234–256, 257–279, 280–302, and 320–351; these read DRNVTIERVEVREMSGYGFDPHE, TINLVLRDSVAHHNGLDGFVADY, QIGGTFENNVAYANDRHGFNIVT, TNDFVMRNNVAYGNGGNGLVVQR, PENILIDGGSYYDNGLEGVLVKM, SNNVTVQNADIHGNGSSGVRVYG, AQGVQILGNQIHDNAKTAVAPEV, and TLNTRVEGNTITGSANSTYGVQERNDGTDFSS. Hemolysin-type calcium-binding repeat units follow at residues 383–394, 401–417, 419–435, 562–578, 580–596, 723–739, and 741–757; these read GTDGNDVLIGSD, GGAGDDRLDGGAGDDLL, GGAGRDRLTGGLGADTF, GGGGADQLYGYGGGDLL, GGAGRDRLTGGEGADTF, GGGGADQLYGYAGNDLL, and GGAGRDKLSGGEGADTF. Residues 401 to 420 form a disordered region; the sequence is GGAGDDRLDGGAGDDLLDGG.

This sequence belongs to the D-mannuronate C5-epimerase family. Requires Ca(2+) as cofactor.

The protein resides in the secreted. The enzyme catalyses [(1-&gt;4)-beta-D-mannuronosyl](n) = [alginate](n). Its pathway is glycan biosynthesis; alginate biosynthesis. Inhibited by zinc. Converts beta-D-mannuronic acid (M) to alpha-L-guluronic acid (G), producing a polymer with gel-forming capacity, required for the formation of the cyst coat. The protein is Mannuronan C5-epimerase AlgE6 of Azotobacter vinelandii.